Reading from the N-terminus, the 129-residue chain is Small ribosomal subunit protein uS11 (129 aa).

The protein belongs to the universal ribosomal protein uS11 family. Part of the 30S ribosomal subunit. Interacts with proteins S7 and S18. Binds to IF-3.

Functionally, located on the platform of the 30S subunit, it bridges several disparate RNA helices of the 16S rRNA. Forms part of the Shine-Dalgarno cleft in the 70S ribosome. This Brucella abortus (strain S19) protein is Small ribosomal subunit protein uS11.